Here is a 167-residue protein sequence, read N- to C-terminus: Ribosome maturation factor RimM (167 aa).

The 73-residue stretch at 93 to 165 (KGVYYDFQLI…QVIIDPIPGL (73 aa)) folds into the PRC barrel domain.

This sequence belongs to the RimM family. As to quaternary structure, binds ribosomal protein uS19.

It localises to the cytoplasm. An accessory protein needed during the final step in the assembly of 30S ribosomal subunit, possibly for assembly of the head region. Essential for efficient processing of 16S rRNA. May be needed both before and after RbfA during the maturation of 16S rRNA. It has affinity for free ribosomal 30S subunits but not for 70S ribosomes. This chain is Ribosome maturation factor RimM, found in Dehalococcoides mccartyi (strain ATCC BAA-2266 / KCTC 15142 / 195) (Dehalococcoides ethenogenes (strain 195)).